Reading from the N-terminus, the 392-residue chain is RNA-binding motif protein, X-linked-like-2 (392 aa).

An RRM domain is found at 8–86 (GKLFIGGLNL…KAIKVAQATK (79 aa)). Over residues 67–78 (RDMNGKSLDGKA) the composition is skewed to basic and acidic residues. The segment at 67 to 392 (RDMNGKSLDG…LERGGGRSRY (326 aa)) is disordered. A compositionally biased stretch (pro residues) spans 150-163 (RGPPPRRVGPPPKR). Composition is skewed to basic and acidic residues over residues 194–229 (PRRE…REPR) and 238–283 (YTHR…REPF). Residues 319-331 (YSGGRDSYSSSYG) are compositionally biased toward low complexity. The segment covering 381 to 392 (GRLERGGGRSRY) has biased composition (basic and acidic residues).

As to expression, expressed predominantly in spermatocytes and less in round spermatids (at protein level). Expressed in germ cells.

The protein localises to the nucleus. The protein is RNA-binding motif protein, X-linked-like-2 (RBMXL2) of Homo sapiens (Human).